A 339-amino-acid polypeptide reads, in one-letter code: Centromere protein N (339 aa).

Phosphoserine occurs at positions 226, 235, and 282.

It belongs to the CENP-N/CHL4 family. Component of the CENPA-NAC complex, at least composed of CENPA, CENPC, CENPH, CENPM, CENPN, CENPT and CENPU. The CENPA-NAC complex interacts with the CENPA-CAD complex, composed of CENPI, CENPK, CENPL, CENPO, CENPP, CENPQ, CENPR and CENPS. Interacts directly with CENPA. Identified in a centromere complex containing histones H2A, H2B and H4, and at least CENPA, CENPB, CENPC, CENPT, CENPN, HJURP, SUPT16H, SSRP1 and RSF1.

The protein resides in the nucleus. It localises to the chromosome. The protein localises to the centromere. Its subcellular location is the kinetochore. In terms of biological role, component of the CENPA-NAC (nucleosome-associated) complex, a complex that plays a central role in assembly of kinetochore proteins, mitotic progression and chromosome segregation. The CENPA-NAC complex recruits the CENPA-CAD (nucleosome distal) complex and may be involved in incorporation of newly synthesized CENPA into centromeres. CENPN is the first protein to bind specifically to CENPA nucleosomes and the direct binding of CENPA nucleosomes by CENPN is required for centromere assembly. Required for chromosome congression and efficiently align the chromosomes on a metaphase plate. The chain is Centromere protein N (CENPN) from Homo sapiens (Human).